The chain runs to 487 residues: N-succinylglutamate 5-semialdehyde dehydrogenase (487 aa).

221–226 (GSSRTG) serves as a coordination point for NAD(+). Residues Glu-244 and Cys-278 contribute to the active site.

This sequence belongs to the aldehyde dehydrogenase family. AstD subfamily.

It catalyses the reaction N-succinyl-L-glutamate 5-semialdehyde + NAD(+) + H2O = N-succinyl-L-glutamate + NADH + 2 H(+). Its pathway is amino-acid degradation; L-arginine degradation via AST pathway; L-glutamate and succinate from L-arginine: step 4/5. Its function is as follows. Catalyzes the NAD-dependent reduction of succinylglutamate semialdehyde into succinylglutamate. This Pseudomonas putida (strain ATCC 47054 / DSM 6125 / CFBP 8728 / NCIMB 11950 / KT2440) protein is N-succinylglutamate 5-semialdehyde dehydrogenase.